Reading from the N-terminus, the 649-residue chain is Macrolide export ATP-binding/permease protein MacB (649 aa).

The 239-residue stretch at 7–245 folds into the ABC transporter domain; that stretch reads IELKNIVRRY…SSAQEVTPQL (239 aa). 43–50 lines the ATP pocket; it reads GASGSGKS. 4 consecutive transmembrane segments (helical) span residues 276 to 296, 529 to 549, 582 to 602, and 612 to 632; these read LLTM…IALG, IAFI…LVSV, LLGG…FSAF, and FSSF…FGYF.

Belongs to the ABC transporter superfamily. Macrolide exporter (TC 3.A.1.122) family. As to quaternary structure, homodimer. Part of the tripartite efflux system MacAB-TolC, which is composed of an inner membrane transporter, MacB, a periplasmic membrane fusion protein, MacA, and an outer membrane component, TolC. The complex forms a large protein conduit and can translocate molecules across both the inner and outer membranes. Interacts with MacA.

It is found in the cell inner membrane. In terms of biological role, part of the tripartite efflux system MacAB-TolC. MacB is a non-canonical ABC transporter that contains transmembrane domains (TMD), which form a pore in the inner membrane, and an ATP-binding domain (NBD), which is responsible for energy generation. Confers resistance against macrolides. The protein is Macrolide export ATP-binding/permease protein MacB of Pasteurella multocida (strain Pm70).